Consider the following 293-residue polypeptide: Protease HtpX (293 aa).

The next 2 helical transmembrane spans lie at 4 to 24 (IALF…VLSL) and 32 to 52 (VTGL…VSLL). His139 contributes to the Zn(2+) binding site. Residue Glu140 is part of the active site. His143 contacts Zn(2+). A run of 2 helical transmembrane segments spans residues 158–178 (VVNT…AGFL) and 193–213 (LIYF…ASII). Residue Glu222 participates in Zn(2+) binding.

This sequence belongs to the peptidase M48B family. Zn(2+) serves as cofactor.

Its subcellular location is the cell inner membrane. This Cronobacter sakazakii (strain ATCC BAA-894) (Enterobacter sakazakii) protein is Protease HtpX.